Here is a 304-residue protein sequence, read N- to C-terminus: Coenzyme PQQ synthesis protein B (304 aa).

This sequence belongs to the PqqB family.

It participates in cofactor biosynthesis; pyrroloquinoline quinone biosynthesis. May be involved in the transport of PQQ or its precursor to the periplasm. The polypeptide is Coenzyme PQQ synthesis protein B (Pseudomonas aeruginosa (strain UCBPP-PA14)).